A 394-amino-acid polypeptide reads, in one-letter code: MNNSNRIRLTWISYLSYALTGALVIVTGIVMGNIAEYFNLPIASMSNTFTFLNAGILISIFLNAWLMEIIPLKRQLVFGFILMLIAIAGLMVGHNLMIFSISMFIFGVVSGITMSIGTFLVTHMYEGRQRGSRLLFTDSFFSMAGMIFPIAAAMLLARHIEWYWVYACIGLLYVGIFVLTLCSEFPVLGHKATDQSKPVVKEKWGVGVLFLAIAALCYILGQLGFIQWVPEYATKTFNMNISQAGQLVSNFWISYMIGMWIFSFILRFFDLQRIVTVLAAMATLAMYLFVSTDNPAYLSYYILALGFVSSAIYTTLITLGSLQTKVSSPKLVNFILTCGTVGTMLTFVVTGPIVANNGVHAALATANGLYLAVFILCLALGFFTKHRSHGHVTH.

The next 12 membrane-spanning stretches (helical) occupy residues 11–31, 51–71, 76–96, 101–121, 134–154, 162–182, 206–226, 246–266, 274–294, 302–322, 334–354, and 363–383; these read WISY…GIVM, FLNA…EIIP, LVFG…GHNL, ISMF…TFLV, LLFT…AAAM, WYWV…LTLC, VGVL…LGFI, QLVS…SFIL, IVTV…STDN, ILAL…LGSL, FILT…GPIV, and LATA…LGFF.

Belongs to the major facilitator superfamily. TsgA family.

The protein resides in the cell inner membrane. This is Protein TsgA homolog from Yersinia pseudotuberculosis serotype O:1b (strain IP 31758).